The following is a 247-amino-acid chain: Adenylate kinase (247 aa).

42-47 (GAGKGT) provides a ligand contact to ATP. Residues 62-91 (ATGDMLRAQVTAKTELGVQAKKIMDQGGLV) are NMP. AMP-binding positions include T63, R68, 89 to 91 (GLV), 118 to 121 (GFPR), and Q125. The interval 159-196 (GRLVHPASGRSYHKLFNPPKKEMTDDQTGEPLVQRSDD) is LID. ATP contacts are provided by residues R160 and 169-170 (SY). The tract at residues 169–191 (SYHKLFNPPKKEMTDDQTGEPLV) is disordered. AMP is bound by residues R193 and R204. Residue Q232 participates in ATP binding.

This sequence belongs to the adenylate kinase family. AK2 subfamily. Monomer.

The protein localises to the cytoplasm. Its subcellular location is the cytosol. It localises to the mitochondrion intermembrane space. The enzyme catalyses AMP + ATP = 2 ADP. Functionally, catalyzes the reversible transfer of the terminal phosphate group between ATP and AMP. Plays an important role in cellular energy homeostasis and in adenine nucleotide metabolism. Adenylate kinase activity is critical for regulation of the phosphate utilization and the AMP de novo biosynthesis pathways. The polypeptide is Adenylate kinase (Meyerozyma guilliermondii (strain ATCC 6260 / CBS 566 / DSM 6381 / JCM 1539 / NBRC 10279 / NRRL Y-324) (Yeast)).